The sequence spans 441 residues: Probable glycine dehydrogenase (decarboxylating) subunit 1 (441 aa).

Belongs to the GcvP family. N-terminal subunit subfamily. The glycine cleavage system is composed of four proteins: P, T, L and H. In this organism, the P 'protein' is a heterodimer of two subunits.

It catalyses the reaction N(6)-[(R)-lipoyl]-L-lysyl-[glycine-cleavage complex H protein] + glycine + H(+) = N(6)-[(R)-S(8)-aminomethyldihydrolipoyl]-L-lysyl-[glycine-cleavage complex H protein] + CO2. Functionally, the glycine cleavage system catalyzes the degradation of glycine. The P protein binds the alpha-amino group of glycine through its pyridoxal phosphate cofactor; CO(2) is released and the remaining methylamine moiety is then transferred to the lipoamide cofactor of the H protein. The polypeptide is Probable glycine dehydrogenase (decarboxylating) subunit 1 (Halobacterium salinarum (strain ATCC 700922 / JCM 11081 / NRC-1) (Halobacterium halobium)).